The sequence spans 469 residues: Cell division protein FtsP (469 aa).

Residues 1–27 constitute a signal peptide (tat-type signal); it reads MKLSRRQFLQRSTLAGVATVTPTSLWA.

It belongs to the FtsP family. In terms of processing, predicted to be exported by the Tat system. The position of the signal peptide cleavage has not been experimentally proven.

The protein resides in the periplasm. Functionally, cell division protein that is required for growth during stress conditions. May be involved in protecting or stabilizing the divisomal assembly under conditions of stress. The protein is Cell division protein FtsP of Glaesserella parasuis serovar 5 (strain SH0165) (Haemophilus parasuis).